Consider the following 191-residue polypeptide: Putative glutathione-dependent formaldehyde-activating enzyme (191 aa).

In terms of domain architecture, CENP-V/GFA spans Phe20 to Asp166. Zn(2+) contacts are provided by Cys27, Cys29, Cys48, Cys50, Cys53, Cys95, and Cys98.

It belongs to the Gfa family. Requires Zn(2+) as cofactor.

It carries out the reaction S-(hydroxymethyl)glutathione = glutathione + formaldehyde. Its pathway is one-carbon metabolism; formaldehyde degradation; formate from formaldehyde (glutathione route): step 1/3. Catalyzes the condensation of formaldehyde and glutathione to S-hydroxymethylglutathione. In Aspergillus flavus (strain ATCC 200026 / FGSC A1120 / IAM 13836 / NRRL 3357 / JCM 12722 / SRRC 167), this protein is Putative glutathione-dependent formaldehyde-activating enzyme.